Here is a 248-residue protein sequence, read N- to C-terminus: PF03932 family protein CutC (248 aa).

The protein belongs to the CutC family.

The protein resides in the cytoplasm. The polypeptide is PF03932 family protein CutC (Porphyromonas gingivalis (strain ATCC BAA-308 / W83)).